Reading from the N-terminus, the 278-residue chain is Large ribosomal subunit protein uL2 (278 aa).

Disordered regions lie at residues 1–58 and 224–278; these read MAIR…GGGH and VVMN…GKKR. Over residues 23 to 33 the composition is skewed to basic and acidic residues; sequence EITRDHPEKSL. Residues 37 to 58 are compositionally biased toward basic residues; the sequence is LHGRGGRNAHGRITTRHKGGGH. Residues 253–268 show a composition bias toward basic and acidic residues; it reads PEGRTRKPKKASDKLI. Residues 269-278 are compositionally biased toward basic residues; that stretch reads VRRRRTGKKR.

Belongs to the universal ribosomal protein uL2 family. Part of the 50S ribosomal subunit. Forms a bridge to the 30S subunit in the 70S ribosome.

In terms of biological role, one of the primary rRNA binding proteins. Required for association of the 30S and 50S subunits to form the 70S ribosome, for tRNA binding and peptide bond formation. It has been suggested to have peptidyltransferase activity; this is somewhat controversial. Makes several contacts with the 16S rRNA in the 70S ribosome. The chain is Large ribosomal subunit protein uL2 from Mycolicibacterium vanbaalenii (strain DSM 7251 / JCM 13017 / BCRC 16820 / KCTC 9966 / NRRL B-24157 / PYR-1) (Mycobacterium vanbaalenii).